The chain runs to 648 residues: Threonine--tRNA ligase (648 aa).

Residues 1-62 enclose the TGS domain; that stretch reads MVEIILPDGS…PHGAQVAIIT (62 aa). The interval 243 to 536 is catalytic; it reads DHRRIGKDLD…LVEHYAGWFP (294 aa). Positions 336, 387, and 513 each coordinate Zn(2+).

This sequence belongs to the class-II aminoacyl-tRNA synthetase family. As to quaternary structure, homodimer. Requires Zn(2+) as cofactor.

Its subcellular location is the cytoplasm. It catalyses the reaction tRNA(Thr) + L-threonine + ATP = L-threonyl-tRNA(Thr) + AMP + diphosphate + H(+). Its function is as follows. Catalyzes the attachment of threonine to tRNA(Thr) in a two-step reaction: L-threonine is first activated by ATP to form Thr-AMP and then transferred to the acceptor end of tRNA(Thr). Also edits incorrectly charged L-seryl-tRNA(Thr). The sequence is that of Threonine--tRNA ligase from Magnetococcus marinus (strain ATCC BAA-1437 / JCM 17883 / MC-1).